Reading from the N-terminus, the 337-residue chain is Glyceraldehyde-3-phosphate dehydrogenase (337 aa).

NAD(+)-binding positions include 12-13 (RI), Asp-34, and Arg-79. Residues 150–152 (SCT), Thr-181, 210–211 (TG), and Arg-233 each bind D-glyceraldehyde 3-phosphate. Residue Cys-151 is the Nucleophile of the active site. Asn-315 provides a ligand contact to NAD(+).

Belongs to the glyceraldehyde-3-phosphate dehydrogenase family. In terms of assembly, homotetramer.

It localises to the cytoplasm. The enzyme catalyses D-glyceraldehyde 3-phosphate + phosphate + NAD(+) = (2R)-3-phospho-glyceroyl phosphate + NADH + H(+). The protein operates within carbohydrate degradation; glycolysis; pyruvate from D-glyceraldehyde 3-phosphate: step 1/5. The protein is Glyceraldehyde-3-phosphate dehydrogenase (GPD) of Podospora anserina (Pleurage anserina).